A 417-amino-acid polypeptide reads, in one-letter code: NADH-quinone oxidoreductase subunit D (417 aa).

Belongs to the complex I 49 kDa subunit family. In terms of assembly, NDH-1 is composed of 14 different subunits. Subunits NuoB, C, D, E, F, and G constitute the peripheral sector of the complex.

Its subcellular location is the cell membrane. The catalysed reaction is a quinone + NADH + 5 H(+)(in) = a quinol + NAD(+) + 4 H(+)(out). Functionally, NDH-1 shuttles electrons from NADH, via FMN and iron-sulfur (Fe-S) centers, to quinones in the respiratory chain. The immediate electron acceptor for the enzyme in this species is believed to be ubiquinone. Couples the redox reaction to proton translocation (for every two electrons transferred, four hydrogen ions are translocated across the cytoplasmic membrane), and thus conserves the redox energy in a proton gradient. This Polynucleobacter asymbioticus (strain DSM 18221 / CIP 109841 / QLW-P1DMWA-1) (Polynucleobacter necessarius subsp. asymbioticus) protein is NADH-quinone oxidoreductase subunit D.